A 406-amino-acid chain; its full sequence is Synaptic vesicle membrane protein VAT-1 homolog (406 aa).

The segment at 1 to 57 (MSAEREAAEAATVAAATEAGAETGTGAGEGAPSQPPTVEVASDPQPPPAPEASASAS) is disordered. An N-acetylserine modification is found at serine 2. Serine 2 bears the Phosphoserine mark. Residues 9–22 (EAATVAAATEAGAE) are compositionally biased toward low complexity. Phosphoserine occurs at positions 33 and 42.

The protein belongs to the zinc-containing alcohol dehydrogenase family. Quinone oxidoreductase subfamily.

The protein localises to the cytoplasm. Its subcellular location is the mitochondrion outer membrane. Functionally, plays a part in calcium-regulated keratinocyte activation in epidermal repair mechanisms. Has no effect on cell proliferation. Possesses ATPase activity. Negatively regulates mitochondrial fusion in cooperation with mitofusin proteins (MFN1-2). This Mus musculus (Mouse) protein is Synaptic vesicle membrane protein VAT-1 homolog (Vat1).